The following is a 168-amino-acid chain: uncharacterized protein (168 aa).

2 consecutive transmembrane segments (helical) span residues 41 to 61 (LLPWKEILVPLSFVMLFLFFI) and 133 to 153 (KFVISVGDILVFIGVFIFFVL).

It localises to the cell membrane. This is an uncharacterized protein from Thermotoga maritima (strain ATCC 43589 / DSM 3109 / JCM 10099 / NBRC 100826 / MSB8).